The chain runs to 505 residues: Trans-cinnamate 4-monooxygenase (505 aa).

The helical transmembrane segment at 3–23 (LLLLEKSLIAVFVAVILATVI) threads the bilayer. Residues 213-218 (RSRLAQ) and Ala-306 contribute to the (E)-cinnamate site. Residue Cys-447 participates in heme binding.

This sequence belongs to the cytochrome P450 family. It depends on heme as a cofactor. As to expression, expressed in roots, leaves, stems, flowers and siliques.

The protein resides in the membrane. The enzyme catalyses (E)-cinnamate + reduced [NADPH--hemoprotein reductase] + O2 = (E)-4-coumarate + oxidized [NADPH--hemoprotein reductase] + H2O + H(+). It participates in phenylpropanoid metabolism; trans-4-coumarate biosynthesis; trans-4-coumarate from trans-cinnamate: step 1/1. Its function is as follows. Catalyzes the first oxidative step of the phenylpropanoid pathway in higher plants by transforming trans-cinnamate into p-coumarate. The compounds formed by this pathway are essential components for lignification, pollination, and defense against ultraviolet light, predators and pathogens. This is Trans-cinnamate 4-monooxygenase from Arabidopsis thaliana (Mouse-ear cress).